A 246-amino-acid chain; its full sequence is UDP-2,3-diacylglucosamine hydrolase (246 aa).

Residues aspartate 8, histidine 10, aspartate 41, asparagine 79, and histidine 114 each contribute to the Mn(2+) site. 79–80 (NR) lines the substrate pocket. Residues aspartate 122, lysine 164, lysine 167, and histidine 195 each coordinate substrate. Histidine 195 and histidine 197 together coordinate Mn(2+).

Belongs to the LpxH family. It depends on Mn(2+) as a cofactor.

It localises to the cell inner membrane. The catalysed reaction is UDP-2-N,3-O-bis[(3R)-3-hydroxytetradecanoyl]-alpha-D-glucosamine + H2O = 2-N,3-O-bis[(3R)-3-hydroxytetradecanoyl]-alpha-D-glucosaminyl 1-phosphate + UMP + 2 H(+). It participates in glycolipid biosynthesis; lipid IV(A) biosynthesis; lipid IV(A) from (3R)-3-hydroxytetradecanoyl-[acyl-carrier-protein] and UDP-N-acetyl-alpha-D-glucosamine: step 4/6. Hydrolyzes the pyrophosphate bond of UDP-2,3-diacylglucosamine to yield 2,3-diacylglucosamine 1-phosphate (lipid X) and UMP by catalyzing the attack of water at the alpha-P atom. Involved in the biosynthesis of lipid A, a phosphorylated glycolipid that anchors the lipopolysaccharide to the outer membrane of the cell. The chain is UDP-2,3-diacylglucosamine hydrolase from Vibrio cholerae serotype O1 (strain ATCC 39541 / Classical Ogawa 395 / O395).